The primary structure comprises 278 residues: Small ribosomal subunit biogenesis GTPase RsgA (278 aa).

Positions 62–218 (KNELTRPRVA…ICDTPGFNVI (157 aa)) constitute a CP-type G domain. GTP-binding positions include 112–115 (TKTD) and 162–170 (GQSGVGKSS). Zn(2+) is bound by residues Cys241, Cys246, His248, and Cys254.

This sequence belongs to the TRAFAC class YlqF/YawG GTPase family. RsgA subfamily. Monomer. Associates with 30S ribosomal subunit, binds 16S rRNA. Zn(2+) is required as a cofactor.

The protein localises to the cytoplasm. Its function is as follows. One of several proteins that assist in the late maturation steps of the functional core of the 30S ribosomal subunit. Helps release RbfA from mature subunits. May play a role in the assembly of ribosomal proteins into the subunit. Circularly permuted GTPase that catalyzes slow GTP hydrolysis, GTPase activity is stimulated by the 30S ribosomal subunit. This Mycoplasma genitalium (strain ATCC 33530 / DSM 19775 / NCTC 10195 / G37) (Mycoplasmoides genitalium) protein is Small ribosomal subunit biogenesis GTPase RsgA.